A 524-amino-acid chain; its full sequence is Tyrosine-protein kinase HCK (524 aa).

Residues 1 to 72 form a disordered region; that stretch reads MGGRSSCEDP…NNSNSMPPGF (72 aa). Residue G2 is the site of N-myristoyl glycine attachment. The S-palmitoyl cysteine moiety is linked to residue G3. Residues 29–38 show a composition bias toward basic and acidic residues; it reads FLRDGSKASK. Y50 carries the post-translational modification Phosphotyrosine; by autocatalysis. Polar residues predominate over residues 54-68; sequence PTSSSKLGPNNSNSM. The 61-residue stretch at 76-136 folds into the SH3 domain; that stretch reads SEDTIVVALY…PSNYVARVNS (61 aa). One can recognise an SH2 domain in the interval 142–239; it reads WFFKGISRKD…GLCQKLSVPC (98 aa). T200 bears the Phosphothreonine mark. Position 207 is a phosphotyrosine (Y207). One can recognise a Protein kinase domain in the interval 260–513; sequence LQMEKKLGAG…YIQSVLDDFY (254 aa). ATP is bound by residues 266–274 and K288; that span reads LGAGQFGEV. D379 acts as the Proton acceptor in catalysis. Y409 carries the post-translational modification Phosphotyrosine; by autocatalysis. At S460 the chain carries Phosphoserine. Phosphotyrosine is present on Y520.

It belongs to the protein kinase superfamily. Tyr protein kinase family. SRC subfamily. In terms of assembly, interacts with ADAM15. Interacts with FASLG. Interacts with ARRB1 and ARRB2. Interacts with FCGR1A; the interaction may be indirect. Interacts with IL6ST. Interacts (via SH3 domain) with ELMO1. Interacts (via SH3 domain) with TP73. Interacts with YAP1. Interacts with ABL1 and ITGB1, and thereby recruits ABL1 to activated ITGB1. Interacts (via SH2 domain) with FLT3 (tyrosine phosphorylated). Interacts with CBL. Interacts with VAV1, WAS and RAPGEF1. Interacts (via SH3 domain) with WDCP. In terms of processing, phosphorylated on several tyrosine residues. Autophosphorylated. Becomes rapidly phosphorylated upon activation of the immunoglobulin receptors FCGR1A and FCGR2A. Phosphorylation at Tyr-409 increases kinase activity. Phosphorylation at Tyr-520 inhibits kinase activity. Kinase activity is not required for phosphorylation at Tyr-520, suggesting that this site may be a target of other kinases. Post-translationally, ubiquitinated by CBL, leading to its degradation via the proteasome. Isoform 2 palmitoylation at position 2 requires prior myristoylation. Palmitoylation at position 3 is required for caveolar localization of isoform 2. In terms of tissue distribution, expressed predominantly in cells of the myeloid and B-lymphoid lineages.

The protein resides in the cytoplasmic vesicle. The protein localises to the secretory vesicle. Its subcellular location is the cytoplasm. It localises to the cytosol. It is found in the membrane. The protein resides in the caveola. The protein localises to the lysosome. Its subcellular location is the cell projection. It localises to the podosome membrane. It is found in the cell membrane. The protein resides in the cell junction. The protein localises to the focal adhesion. Its subcellular location is the cytoskeleton. It localises to the golgi apparatus. It is found in the nucleus. It carries out the reaction L-tyrosyl-[protein] + ATP = O-phospho-L-tyrosyl-[protein] + ADP + H(+). Subject to autoinhibition, mediated by intramolecular interactions involving the SH2 and SH3 domains. Kinase activity is also regulated by phosphorylation at regulatory tyrosine residues. Phosphorylation at Tyr-409 is required for optimal activity. Phosphorylation at Tyr-520 inhibits kinase activity. Inhibited by PP1. In terms of biological role, non-receptor tyrosine-protein kinase found in hematopoietic cells that transmits signals from cell surface receptors and plays an important role in the regulation of innate immune responses, including neutrophil, monocyte, macrophage and mast cell functions, phagocytosis, cell survival and proliferation, cell adhesion and migration. Acts downstream of receptors that bind the Fc region of immunoglobulins, such as FCGR1A and FCGR2A, but also CSF3R, PLAUR, the receptors for IFNG, IL2, IL6 and IL8, and integrins, such as ITGB1 and ITGB2. During the phagocytic process, mediates mobilization of secretory lysosomes, degranulation, and activation of NADPH oxidase to bring about the respiratory burst. Plays a role in the release of inflammatory molecules. Promotes reorganization of the actin cytoskeleton and actin polymerization, formation of podosomes and cell protrusions. Inhibits TP73-mediated transcription activation and TP73-mediated apoptosis. Phosphorylates CBL in response to activation of immunoglobulin gamma Fc region receptors. Phosphorylates ADAM15, BCR, ELMO1, FCGR2A, GAB1, GAB2, RAPGEF1, STAT5B, TP73, VAV1 and WAS. This chain is Tyrosine-protein kinase HCK (Hck), found in Mus musculus (Mouse).